The following is a 75-amino-acid chain: Small ribosomal subunit protein eS28 (75 aa).

The protein belongs to the eukaryotic ribosomal protein eS28 family.

The sequence is that of Small ribosomal subunit protein eS28 from Natronomonas pharaonis (strain ATCC 35678 / DSM 2160 / CIP 103997 / JCM 8858 / NBRC 14720 / NCIMB 2260 / Gabara) (Halobacterium pharaonis).